We begin with the raw amino-acid sequence, 426 residues long: Enolase (426 aa).

Q163 provides a ligand contact to (2R)-2-phosphoglycerate. The active-site Proton donor is E205. 3 residues coordinate Mg(2+): D242, E286, and D313. 4 residues coordinate (2R)-2-phosphoglycerate: K338, R367, S368, and K389. K338 functions as the Proton acceptor in the catalytic mechanism.

Belongs to the enolase family. It depends on Mg(2+) as a cofactor.

It is found in the cytoplasm. The protein resides in the secreted. It localises to the cell surface. It carries out the reaction (2R)-2-phosphoglycerate = phosphoenolpyruvate + H2O. It participates in carbohydrate degradation; glycolysis; pyruvate from D-glyceraldehyde 3-phosphate: step 4/5. Catalyzes the reversible conversion of 2-phosphoglycerate (2-PG) into phosphoenolpyruvate (PEP). It is essential for the degradation of carbohydrates via glycolysis. The chain is Enolase from Helicobacter acinonychis (strain Sheeba).